Consider the following 791-residue polypeptide: Ubiquitin carboxyl-terminal hydrolase 10-A (791 aa).

Polar residues-rich tracts occupy residues 118 to 139 (FSESSIPDGSGNADSDGTSGTG) and 270 to 284 (DTTENLGVTNGQTLE). Disordered stretches follow at residues 118–156 (FSESSIPDGSGNADSDGTSGTGQRERKKKKKRPPGYYSY) and 270–291 (DTTENLGVTNGQTLESPEEDTA). One can recognise a USP domain in the interval 408–788 (RGLINKGNWC…TAYLLYYRRV (381 aa)). Catalysis depends on Cys-417, which acts as the Nucleophile. The interval 560-580 (EVNKEEQEGSDEEWEQVGPRN) is disordered. The active-site Proton acceptor is His-742.

The protein belongs to the peptidase C19 family. USP10 subfamily.

It is found in the cytoplasm. It localises to the nucleus. It catalyses the reaction Thiol-dependent hydrolysis of ester, thioester, amide, peptide and isopeptide bonds formed by the C-terminal Gly of ubiquitin (a 76-residue protein attached to proteins as an intracellular targeting signal).. In terms of biological role, hydrolase that can remove conjugated ubiquitin from target proteins such as p53/tp53, rps2/us5, rps3/us3, rps10/eS10, becn1, snx3 and cftr. Acts as an essential regulator of p53/tp53 stability: in unstressed cells, specifically deubiquitinates p53/tp53 in the cytoplasm, leading to counteracts MDM2 action and stabilize p53/tp53. Following DNA damage, translocates to the nucleus and deubiquitinates p53/tp53, leading to regulate the p53/TP53-dependent DNA damage response. Component of a regulatory loop that controls autophagy and p53/tp53 levels. Plays a key role in 40S ribosome subunit recycling when a ribosome has stalled during translation: acts both by inhibiting formation of stress granules, which store stalled translation pre-initiation complexes, and mediating deubiquitination of 40S ribosome subunits. Deubiquitinates cftr in early endosomes, enhancing its endocytic recycling. In Xenopus laevis (African clawed frog), this protein is Ubiquitin carboxyl-terminal hydrolase 10-A (usp10-a).